Reading from the N-terminus, the 178-residue chain is ATP synthase subunit delta (178 aa).

It belongs to the ATPase delta chain family. In terms of assembly, F-type ATPases have 2 components, F(1) - the catalytic core - and F(0) - the membrane proton channel. F(1) has five subunits: alpha(3), beta(3), gamma(1), delta(1), epsilon(1). F(0) has three main subunits: a(1), b(2) and c(10-14). The alpha and beta chains form an alternating ring which encloses part of the gamma chain. F(1) is attached to F(0) by a central stalk formed by the gamma and epsilon chains, while a peripheral stalk is formed by the delta and b chains.

The protein localises to the cell inner membrane. Functionally, f(1)F(0) ATP synthase produces ATP from ADP in the presence of a proton or sodium gradient. F-type ATPases consist of two structural domains, F(1) containing the extramembraneous catalytic core and F(0) containing the membrane proton channel, linked together by a central stalk and a peripheral stalk. During catalysis, ATP synthesis in the catalytic domain of F(1) is coupled via a rotary mechanism of the central stalk subunits to proton translocation. In terms of biological role, this protein is part of the stalk that links CF(0) to CF(1). It either transmits conformational changes from CF(0) to CF(1) or is implicated in proton conduction. The sequence is that of ATP synthase subunit delta from Pseudomonas syringae pv. syringae (strain B728a).